A 471-amino-acid polypeptide reads, in one-letter code: Probable flavin-containing monoamine oxidase B (471 aa).

C406 is modified (S-8alpha-FAD cysteine).

This sequence belongs to the flavin monoamine oxidase family. FAD is required as a cofactor.

It catalyses the reaction a secondary aliphatic amine + O2 + H2O = a primary amine + an aldehyde + H2O2. The polypeptide is Probable flavin-containing monoamine oxidase B (maoB-1) (Dictyostelium discoideum (Social amoeba)).